Here is a 351-residue protein sequence, read N- to C-terminus: Translation initiation factor eIF2B subunit beta (351 aa).

This sequence belongs to the eIF-2B alpha/beta/delta subunits family. In terms of assembly, component of the translation initiation factor 2B (eIF2B) complex which is a heterodecamer of two sets of five different subunits: alpha, beta, gamma, delta and epsilon. Subunits alpha, beta and delta comprise a regulatory subcomplex and subunits epsilon and gamma comprise a catalytic subcomplex. Within the complex, the hexameric regulatory complex resides at the center, with the two heterodimeric catalytic subcomplexes bound on opposite sides.

Its subcellular location is the cytoplasm. The protein localises to the cytosol. With respect to regulation, activated by the chemical integrated stress response (ISR) inhibitor ISRIB which stimulates guanine nucleotide exchange factor activity for both phosphorylated and unphosphorylated eIF2. In terms of biological role, acts as a component of the translation initiation factor 2B (eIF2B) complex, which catalyzes the exchange of GDP for GTP on eukaryotic initiation factor 2 (eIF2) gamma subunit. Its guanine nucleotide exchange factor activity is repressed when bound to eIF2 complex phosphorylated on the alpha subunit, thereby limiting the amount of methionyl-initiator methionine tRNA available to the ribosome and consequently global translation is repressed. The sequence is that of Translation initiation factor eIF2B subunit beta (Eif2b2) from Rattus norvegicus (Rat).